The primary structure comprises 221 residues: Ras-related protein RABA5a (221 aa).

21-28 (GDSAVGKS) is a binding site for GTP. Residues 43–51 (SKSTIGVEF) carry the Effector region motif. GTP is bound by residues 69 to 73 (DTAGQ), 127 to 130 (NKSD), and 157 to 158 (SA). S-geranylgeranyl cysteine attachment occurs at residues Cys218 and Cys219.

The protein belongs to the small GTPase superfamily. Rab family.

It is found in the cell membrane. Its function is as follows. Intracellular vesicle trafficking and protein transport. This chain is Ras-related protein RABA5a (RABA5A), found in Arabidopsis thaliana (Mouse-ear cress).